A 197-amino-acid chain; its full sequence is HTH-type transcriptional repressor BdcR (197 aa).

The HTH tetR-type domain occupies 15–75; sequence RFAPEQAISA…RVLNEYVGTE (61 aa). The H-T-H motif DNA-binding region spans 38 to 57; sequence SVAEVTDYLGINPPSLYAAF.

Functionally, negatively regulates expression of bdcA. This is HTH-type transcriptional repressor BdcR (bdcR) from Escherichia coli (strain K12).